Consider the following 152-residue polypeptide: Proteolipid protein 2 (152 aa).

In terms of domain architecture, MARVEL spans 19–138 (FSRTKKGILL…DAYITFPLKQ (120 aa)). The next 4 helical transmembrane spans lie at 25–45 (GILL…FSAS), 48–68 (SAYS…LVFY), 85–105 (DFFR…VVLV), and 112–132 (RVVA…DAYI).

Its subcellular location is the membrane. Its function is as follows. May play a role in cell differentiation in the intestinal epithelium. This Mus musculus (Mouse) protein is Proteolipid protein 2 (Plp2).